The sequence spans 126 residues: Histone H2B type 1-D (126 aa).

Residues 1–12 (MPEPTKSAPAPK) are compositionally biased toward low complexity. A disordered region spans residues 1–36 (MPEPTKSAPAPKKGSKKAVTKAQKKDGKKRKRSRKE). Pro2 is subject to N-acetylproline. The residue at position 3 (Glu3) is an ADP-ribosyl glutamic acid. Lys6 bears the N6-(2-hydroxyisobutyryl)lysine; alternate mark. Lys6 carries the post-translational modification N6-(beta-hydroxybutyryl)lysine; alternate. Lys6 carries the N6-acetyllysine; alternate modification. Position 6 is an N6-butyryllysine; alternate (Lys6). An N6-crotonyllysine; alternate modification is found at Lys6. The residue at position 6 (Lys6) is an N6-lactoyllysine; alternate. A Glycyl lysine isopeptide (Lys-Gly) (interchain with G-Cter in SUMO2); alternate cross-link involves residue Lys6. Ser7 is subject to ADP-ribosylserine. N6-(beta-hydroxybutyryl)lysine; alternate is present on Lys12. N6-acetyllysine; alternate occurs at positions 12 and 13. 2 positions are modified to N6-crotonyllysine; alternate: Lys12 and Lys13. Lys12 bears the N6-lactoyllysine; alternate mark. Lys13 carries the N6-(2-hydroxyisobutyryl)lysine; alternate modification. Ser15 carries the post-translational modification Phosphoserine; by STK4/MST1. 4 positions are modified to N6-acetyllysine; alternate: Lys16, Lys17, Lys21, and Lys24. Residues Lys16, Lys17, Lys21, and Lys24 each carry the N6-crotonyllysine; alternate modification. 4 positions are modified to N6-lactoyllysine; alternate: Lys16, Lys17, Lys21, and Lys24. An N6-(beta-hydroxybutyryl)lysine; alternate mark is found at Lys17 and Lys21. Lys17 is modified (N6-glutaryllysine; alternate). N6-(2-hydroxyisobutyryl)lysine; alternate occurs at positions 21 and 24. The residue at position 21 (Lys21) is an N6-butyryllysine; alternate. Lys21 participates in a covalent cross-link: Glycyl lysine isopeptide (Lys-Gly) (interchain with G-Cter in SUMO2); alternate. Lys25 bears the N6-(2-hydroxyisobutyryl)lysine mark. Residue Lys35 is modified to N6-(2-hydroxyisobutyryl)lysine; alternate. Lys35 is modified (N6-(beta-hydroxybutyryl)lysine; alternate). Lys35 carries the post-translational modification N6-crotonyllysine; alternate. Residue Lys35 is modified to N6-glutaryllysine; alternate. Lys35 carries the post-translational modification N6-succinyllysine; alternate. Residue Lys35 forms a Glycyl lysine isopeptide (Lys-Gly) (interchain with G-Cter in ubiquitin); alternate linkage. The residue at position 36 (Glu36) is a PolyADP-ribosyl glutamic acid. Position 37 is a phosphoserine; by AMPK (Ser37). An N6-(2-hydroxyisobutyryl)lysine; alternate mark is found at Lys44, Lys47, and Lys58. At Lys44 the chain carries N6-lactoyllysine; alternate. Residues Lys44 and Lys47 each carry the N6-glutaryllysine; alternate modification. N6-methyllysine; alternate is present on Lys47. Lys58 is modified (N6,N6-dimethyllysine; alternate). A Dimethylated arginine modification is found at Arg80. Lys86 is subject to N6-(2-hydroxyisobutyryl)lysine; alternate. Lys86 bears the N6-(beta-hydroxybutyryl)lysine; alternate mark. The residue at position 86 (Lys86) is an N6-acetyllysine; alternate. An N6-lactoyllysine; alternate modification is found at Lys86. Lys86 bears the N6,N6,N6-trimethyllysine; alternate mark. Omega-N-methylarginine is present on residues Arg87 and Arg93. Lys109 is modified (N6-(2-hydroxyisobutyryl)lysine; alternate). Lys109 carries the N6-lactoyllysine; alternate modification. Position 109 is an N6-glutaryllysine; alternate (Lys109). Lys109 bears the N6-methyllysine; alternate mark. The O-linked (GlcNAc) serine glycan is linked to Ser113. Position 116 is a phosphothreonine (Thr116). N6-(2-hydroxyisobutyryl)lysine; alternate occurs at positions 117 and 121. 2 positions are modified to N6-(beta-hydroxybutyryl)lysine; alternate: Lys117 and Lys121. N6-lactoyllysine; alternate occurs at positions 117 and 121. Lys117 and Lys121 each carry N6-glutaryllysine; alternate. N6-succinyllysine; alternate is present on residues Lys117 and Lys121. Position 117 is an N6-malonyllysine; alternate (Lys117). At Lys117 the chain carries N6-methylated lysine; alternate. Residue Lys121 forms a Glycyl lysine isopeptide (Lys-Gly) (interchain with G-Cter in ubiquitin); alternate linkage.

This sequence belongs to the histone H2B family. As to quaternary structure, the nucleosome is a histone octamer containing two molecules each of H2A, H2B, H3 and H4 assembled in one H3-H4 heterotetramer and two H2A-H2B heterodimers. The octamer wraps approximately 147 bp of DNA. Post-translationally, monoubiquitination at Lys-35 (H2BK34Ub) by the MSL1/MSL2 dimer is required for histone H3 'Lys-4' (H3K4me) and 'Lys-79' (H3K79me) methylation and transcription activation at specific gene loci, such as HOXA9 and MEIS1 loci. Similarly, monoubiquitination at Lys-121 (H2BK120Ub) by the RNF20/40 complex gives a specific tag for epigenetic transcriptional activation and is also prerequisite for histone H3 'Lys-4' and 'Lys-79' methylation. It also functions cooperatively with the FACT dimer to stimulate elongation by RNA polymerase II. H2BK120Ub also acts as a regulator of mRNA splicing: deubiquitination by USP49 is required for efficient cotranscriptional splicing of a large set of exons. In terms of processing, phosphorylation at Ser-37 (H2BS36ph) by AMPK in response to stress promotes transcription. Phosphorylated on Ser-15 (H2BS14ph) by STK4/MST1 during apoptosis; which facilitates apoptotic chromatin condensation. Also phosphorylated on Ser-15 in response to DNA double strand breaks (DSBs), and in correlation with somatic hypermutation and immunoglobulin class-switch recombination. GlcNAcylation at Ser-113 promotes monoubiquitination of Lys-121. It fluctuates in response to extracellular glucose, and associates with transcribed genes. Post-translationally, ADP-ribosylated by PARP1 or PARP2 on Ser-7 (H2BS6ADPr) in response to DNA damage. H2BS6ADPr promotes recruitment of CHD1L. Mono-ADP-ribosylated on Glu-3 (H2BE2ADPr) by PARP3 in response to single-strand breaks. Poly ADP-ribosylation on Glu-36 (H2BE35ADPr) by PARP1 regulates adipogenesis: it inhibits phosphorylation at Ser-37 (H2BS36ph), thereby blocking expression of pro-adipogenetic genes. In terms of processing, crotonylation (Kcr) is specifically present in male germ cells and marks testis-specific genes in post-meiotic cells, including X-linked genes that escape sex chromosome inactivation in haploid cells. Crotonylation marks active promoters and enhancers and confers resistance to transcriptional repressors. It is also associated with post-meiotically activated genes on autosomes. Lactylated in macrophages by EP300/P300 by using lactoyl-CoA directly derived from endogenous or exogenous lactate, leading to stimulates gene transcription.

The protein resides in the nucleus. It localises to the chromosome. Functionally, core component of nucleosome. Nucleosomes wrap and compact DNA into chromatin, limiting DNA accessibility to the cellular machineries which require DNA as a template. Histones thereby play a central role in transcription regulation, DNA repair, DNA replication and chromosomal stability. DNA accessibility is regulated via a complex set of post-translational modifications of histones, also called histone code, and nucleosome remodeling. This Homo sapiens (Human) protein is Histone H2B type 1-D.